The primary structure comprises 734 residues: Photosystem I P700 chlorophyll a apoprotein A2 (734 aa).

8 helical membrane passes run 46-69 (IFAS…FHVA), 135-158 (LYTG…LHLQ), 175-199 (LNHH…HVAI), 273-291 (MAHH…GHMY), 330-353 (LHFQ…QHMY), 369-395 (AASY…IFFI), 417-439 (AIIS…LYVH), and 517-535 (FLVH…LILV). Cysteine 559 and cysteine 568 together coordinate [4Fe-4S] cluster. 2 consecutive transmembrane segments (helical) span residues 575 to 596 (AFYL…YWHW) and 643 to 665 (LSVW…MFLI). The chlorophyll a site is built by histidine 654, methionine 662, and tyrosine 670. A phylloquinone-binding site is contributed by tryptophan 671. A helical transmembrane segment spans residues 707–727 (LVGLAHFSVGYIFTYAAFLIA).

The protein belongs to the PsaA/PsaB family. The PsaA/B heterodimer binds the P700 chlorophyll special pair and subsequent electron acceptors. PSI consists of a core antenna complex that captures photons, and an electron transfer chain that converts photonic excitation into a charge separation. The eukaryotic PSI reaction center is composed of at least 11 subunits. P700 is a chlorophyll a/chlorophyll a' dimer, A0 is one or more chlorophyll a, A1 is one or both phylloquinones and FX is a shared 4Fe-4S iron-sulfur center. is required as a cofactor.

The protein resides in the plastid. The protein localises to the chloroplast thylakoid membrane. The enzyme catalyses reduced [plastocyanin] + hnu + oxidized [2Fe-2S]-[ferredoxin] = oxidized [plastocyanin] + reduced [2Fe-2S]-[ferredoxin]. In terms of biological role, psaA and PsaB bind P700, the primary electron donor of photosystem I (PSI), as well as the electron acceptors A0, A1 and FX. PSI is a plastocyanin-ferredoxin oxidoreductase, converting photonic excitation into a charge separation, which transfers an electron from the donor P700 chlorophyll pair to the spectroscopically characterized acceptors A0, A1, FX, FA and FB in turn. Oxidized P700 is reduced on the lumenal side of the thylakoid membrane by plastocyanin. In Acorus calamus (Sweet flag), this protein is Photosystem I P700 chlorophyll a apoprotein A2.